The primary structure comprises 499 residues: Glucose-6-phosphate isomerase (499 aa).

Catalysis depends on E352, which acts as the Proton donor. Active-site residues include H383 and K487.

This sequence belongs to the GPI family.

It is found in the cytoplasm. It carries out the reaction alpha-D-glucose 6-phosphate = beta-D-fructose 6-phosphate. It participates in carbohydrate biosynthesis; gluconeogenesis. It functions in the pathway carbohydrate degradation; glycolysis; D-glyceraldehyde 3-phosphate and glycerone phosphate from D-glucose: step 2/4. In terms of biological role, catalyzes the reversible isomerization of glucose-6-phosphate to fructose-6-phosphate. The sequence is that of Glucose-6-phosphate isomerase from Legionella pneumophila (strain Lens).